The sequence spans 352 residues: Histidinol-phosphate aminotransferase 1 (352 aa).

Lys211 carries the N6-(pyridoxal phosphate)lysine modification.

It belongs to the class-II pyridoxal-phosphate-dependent aminotransferase family. Histidinol-phosphate aminotransferase subfamily. As to quaternary structure, homodimer. It depends on pyridoxal 5'-phosphate as a cofactor.

The catalysed reaction is L-histidinol phosphate + 2-oxoglutarate = 3-(imidazol-4-yl)-2-oxopropyl phosphate + L-glutamate. The protein operates within amino-acid biosynthesis; L-histidine biosynthesis; L-histidine from 5-phospho-alpha-D-ribose 1-diphosphate: step 7/9. This chain is Histidinol-phosphate aminotransferase 1, found in Haemophilus influenzae (strain 86-028NP).